The chain runs to 197 residues: Negative modulator of initiation of replication (197 aa).

This sequence belongs to the SeqA family. As to quaternary structure, homodimer. Polymerizes to form helical filaments.

The protein localises to the cytoplasm. In terms of biological role, negative regulator of replication initiation, which contributes to regulation of DNA replication and ensures that replication initiation occurs exactly once per chromosome per cell cycle. Binds to pairs of hemimethylated GATC sequences in the oriC region, thus preventing assembly of replication proteins and re-initiation at newly replicated origins. Repression is relieved when the region becomes fully methylated. The polypeptide is Negative modulator of initiation of replication (Pseudoalteromonas translucida (strain TAC 125)).